The sequence spans 111 residues: uncharacterized protein (111 aa).

This is an uncharacterized protein from Escherichia coli (strain K12).